The primary structure comprises 444 residues: Argininosuccinate synthase (444 aa).

Residues Ala17–Ser25 and Ala43 each bind ATP. Position 99 (Tyr99) interacts with L-citrulline. ATP contacts are provided by Gly129 and Thr131. Positions 131, 135, and 136 each coordinate L-aspartate. Asn135 is an L-citrulline binding site. Asp136 contacts ATP. Arg139 and Ser192 together coordinate L-citrulline. Residue Asp194 coordinates ATP. Thr201, Glu203, and Glu280 together coordinate L-citrulline.

Belongs to the argininosuccinate synthase family. Type 2 subfamily. Homotetramer.

It is found in the cytoplasm. It catalyses the reaction L-citrulline + L-aspartate + ATP = 2-(N(omega)-L-arginino)succinate + AMP + diphosphate + H(+). It functions in the pathway amino-acid biosynthesis; L-arginine biosynthesis; L-arginine from L-ornithine and carbamoyl phosphate: step 2/3. This is Argininosuccinate synthase from Burkholderia lata (strain ATCC 17760 / DSM 23089 / LMG 22485 / NCIMB 9086 / R18194 / 383).